Consider the following 602-residue polypeptide: Elongation factor 4 (602 aa).

The 183-residue stretch at 7–189 (SKIRNFCIIA…AIVRRVPAPQ (183 aa)) folds into the tr-type G domain. GTP-binding positions include 19–24 (DHGKST) and 136–139 (NKVD).

It belongs to the TRAFAC class translation factor GTPase superfamily. Classic translation factor GTPase family. LepA subfamily.

The protein localises to the cell inner membrane. The enzyme catalyses GTP + H2O = GDP + phosphate + H(+). Functionally, required for accurate and efficient protein synthesis under certain stress conditions. May act as a fidelity factor of the translation reaction, by catalyzing a one-codon backward translocation of tRNAs on improperly translocated ribosomes. Back-translocation proceeds from a post-translocation (POST) complex to a pre-translocation (PRE) complex, thus giving elongation factor G a second chance to translocate the tRNAs correctly. Binds to ribosomes in a GTP-dependent manner. In Prochlorococcus marinus (strain MIT 9312), this protein is Elongation factor 4.